The primary structure comprises 156 residues: Small ribosomal subunit protein uS7 (156 aa).

It belongs to the universal ribosomal protein uS7 family. In terms of assembly, part of the 30S ribosomal subunit. Contacts proteins S9 and S11.

One of the primary rRNA binding proteins, it binds directly to 16S rRNA where it nucleates assembly of the head domain of the 30S subunit. Is located at the subunit interface close to the decoding center, probably blocks exit of the E-site tRNA. The polypeptide is Small ribosomal subunit protein uS7 (Vibrio parahaemolyticus serotype O3:K6 (strain RIMD 2210633)).